The following is a 498-amino-acid chain: Phosphonates import ATP-binding protein PhnC (498 aa).

Residues 1–27 (MPQRPEAARAGPVAGPDAASKPAPGPA) form a disordered region. The ABC transporter domain maps to 28-269 (LTLRGAGRAY…DLGELYEARR (242 aa)). Position 60 to 67 (60 to 67 (GPSGAGKS)) interacts with ATP. The segment at 270–498 (GAADPARAPA…LEVARAEVPP (229 aa)) is lysR substrate binding domain.

The protein belongs to the ABC transporter superfamily. Phosphonates importer (TC 3.A.1.9.1) family. In terms of assembly, the complex is composed of two ATP-binding proteins (PhnC), two transmembrane proteins (PhnE) and a solute-binding protein (PhnD).

Its subcellular location is the cell inner membrane. The catalysed reaction is phosphonate(out) + ATP + H2O = phosphonate(in) + ADP + phosphate + H(+). In terms of biological role, part of the ABC transporter complex PhnCDE involved in phosphonates import. Responsible for energy coupling to the transport system. This Anaeromyxobacter dehalogenans (strain 2CP-C) protein is Phosphonates import ATP-binding protein PhnC.